Reading from the N-terminus, the 328-residue chain is Surface antigen CRP170 (328 aa).

2 consecutive repeats follow at residues 38–102 and 103–167; these read NAPC…CKKC.

This is Surface antigen CRP170 from Giardia intestinalis (Giardia lamblia).